The primary structure comprises 156 residues: CD-NTase/cGAS isopeptidase (156 aa).

The MPN domain maps to 16–156 (LVVIMGHVVT…LITVFKKIES (141 aa)). The active-site Proton donor/acceptor is glutamate 39. Residues histidine 101, histidine 103, and aspartate 114 each contribute to the Zn(2+) site. The JAMM motif signature appears at 101–114 (HTHPEDRPFPSATD).

It belongs to the peptidase M67B family. Cap3 isopeptidase subfamily. Zn(2+) serves as cofactor.

Cleavage of conjugated proteins is inhibited by EDTA. Metalloprotease priming reversal component of a CBASS system. CBASS (cyclic oligonucleotide-based antiphage signaling system) provides immunity against bacteriophages. The CD-NTase protein (DncV) synthesizes cyclic nucleotides in response to infection; these serve as specific second messenger signals. The signals activate a diverse range of effectors, leading to bacterial cell death and thus abortive phage infection. A type II-A(GA) CBASS system. In terms of biological role, reverses the primed state of DncV, the CD-NTase. Cleaves a DncV-GFP (green fluorescent protein) fusion protein precisely at the C-terminus of DncV. Overexpression decreases the efficacy of CBASS protection against phages T2, T4, T5 and T6, blocks formation of DncV-conjugates in vivo, and inhibits in vivo activation of DncV. Antagonism of phage defense upon overexpression is CBASS-system specific, Cap3 from this bacteria only antagonizes its cognate CBASS system and not that of C.freundii, E.coli or E.hormaechei. Functionally, protects E.coli against phage infection. When the CBASS operon (capV-dncV-cap2-cap3) is introduced in E.coli MG1655 there is about 100-fold protection against phages P1 and T2. When the operon is introduced in E.coli MG1655 there is a more than 10(3) decrease in the efficiency of T2 plaque formation. Protects 100-fold against phage T5, offers no protection against T7. When the operon is introduced in E.coli MG1655 it protects against phages T2, T4, T5 and T6. Another paper shows the operon confers protection against phages P1, T2, T5 and T6 but not T4 or lambda. The chain is CD-NTase/cGAS isopeptidase from Vibrio cholerae serotype O1 (strain ATCC 39315 / El Tor Inaba N16961).